A 262-amino-acid polypeptide reads, in one-letter code: Thiazole synthase (262 aa).

Residue Lys-104 is the Schiff-base intermediate with DXP of the active site. 1-deoxy-D-xylulose 5-phosphate is bound by residues Gly-165, 191 to 192 (AG), and 213 to 214 (NT).

The protein belongs to the ThiG family. In terms of assembly, homotetramer. Forms heterodimers with either ThiH or ThiS.

It localises to the cytoplasm. It carries out the reaction [ThiS sulfur-carrier protein]-C-terminal-Gly-aminoethanethioate + 2-iminoacetate + 1-deoxy-D-xylulose 5-phosphate = [ThiS sulfur-carrier protein]-C-terminal Gly-Gly + 2-[(2R,5Z)-2-carboxy-4-methylthiazol-5(2H)-ylidene]ethyl phosphate + 2 H2O + H(+). It functions in the pathway cofactor biosynthesis; thiamine diphosphate biosynthesis. Catalyzes the rearrangement of 1-deoxy-D-xylulose 5-phosphate (DXP) to produce the thiazole phosphate moiety of thiamine. Sulfur is provided by the thiocarboxylate moiety of the carrier protein ThiS. In vitro, sulfur can be provided by H(2)S. In Alkalilimnicola ehrlichii (strain ATCC BAA-1101 / DSM 17681 / MLHE-1), this protein is Thiazole synthase.